We begin with the raw amino-acid sequence, 379 residues long: Tryptophan 2,3-dioxygenase (379 aa).

Substrate is bound by residues 57–61 and Arg-128; that span reads FIITH. His-312 is a binding site for heme. Thr-327 contacts substrate.

The protein belongs to the tryptophan 2,3-dioxygenase family. Homotetramer. Dimer of dimers. The cofactor is heme.

The catalysed reaction is L-tryptophan + O2 = N-formyl-L-kynurenine. Its pathway is amino-acid degradation; L-tryptophan degradation via kynurenine pathway; L-kynurenine from L-tryptophan: step 1/2. It functions in the pathway pigment biosynthesis; ommochrome biosynthesis. Its function is as follows. Heme-dependent dioxygenase that catalyzes the oxidative cleavage of the L-tryptophan (L-Trp) pyrrole ring and converts L-tryptophan to N-formyl-L-kynurenine. Catalyzes the oxidative cleavage of the indole moiety. In Drosophila sechellia (Fruit fly), this protein is Tryptophan 2,3-dioxygenase.